Consider the following 199-residue polypeptide: MSVLVPMVVEQTSRGERAYDIYSRLLKDRIIFLGSAIDDHVANLVIAQMLFLEAEDPDKDIHLYINSPGGSISAGMAIFDTMQYIRPDVSTICVGLAASMGAFLLAAGAKGKRFALPNSEIMIHQPMGGTQGQAVDIEIHAKRILAIRDNLNRILSEITGKPLEQIARDTDRDHFMTAREAREYGLIDEVITKRELPAK.

Catalysis depends on S99, which acts as the Nucleophile. The active site involves H124.

It belongs to the peptidase S14 family. Fourteen ClpP subunits assemble into 2 heptameric rings which stack back to back to give a disk-like structure with a central cavity, resembling the structure of eukaryotic proteasomes.

The protein localises to the cytoplasm. The catalysed reaction is Hydrolysis of proteins to small peptides in the presence of ATP and magnesium. alpha-casein is the usual test substrate. In the absence of ATP, only oligopeptides shorter than five residues are hydrolyzed (such as succinyl-Leu-Tyr-|-NHMec, and Leu-Tyr-Leu-|-Tyr-Trp, in which cleavage of the -Tyr-|-Leu- and -Tyr-|-Trp bonds also occurs).. Functionally, cleaves peptides in various proteins in a process that requires ATP hydrolysis. Has a chymotrypsin-like activity. Plays a major role in the degradation of misfolded proteins. This chain is ATP-dependent Clp protease proteolytic subunit, found in Moorella thermoacetica (strain ATCC 39073 / JCM 9320).